The following is a 310-amino-acid chain: VTGSCVVTGSCVVTDSCVVTGSCGNTRTVTTQESVTTQEPVTIEEPVTTQEPVTIEEPVTTQEPVTIEEPVTTQEPVTTQEPVTTQEPVTTQEPVTTQEPVTVEEHIDEKKGSEGDNISLSSLSEETEEKSHTKKKKSSWLKFGRGNKNDKKSKNEKKPSLESVKQNADEQKEQPTDSQISVNAQDSVTIQEPTATQEPPTTQELTATQEPTTTQETVTEQEPTTTQETVTAQEPITTQEPVTAQEPVTTQELIATQEPSTTQEHADEKKASEGDNISLSRLSEETEEKSHTKKKSSWLKFGRGNKNDKK.

Positions 1–23 (VTGSCVVTGSCVVTDSCVVTGSC) are 4 X 6 AA tandem repeats of V-V-T-G-S-C. The 13 X 6 AA tandem repeats of V-V-[TI]-[QE]-E-[PH] stretch occupies residues 29–106 (VTTQESVTTQ…TQEPVTVEEH (78 aa)). A compositionally biased stretch (low complexity) spans 53 to 101 (VTIEEPVTTQEPVTIEEPVTTQEPVTTQEPVTTQEPVTTQEPVTTQEPV). The disordered stretch occupies residues 53–310 (VTIEEPVTTQ…FGRGNKNDKK (258 aa)). Basic and acidic residues-rich tracts occupy residues 103–114 (VEEHIDEKKGSE) and 147–160 (NKND…KKPS). Residues 107–152 (IDEKKGSEGDNISLSSLSEETEEKSHTKKKKSSWLKFGRGNKNDKK) form a 45 AA repeat 1 repeat. Positions 176–190 (TDSQISVNAQDSVTI) are enriched in polar residues. The segment at 188–265 (VTIQEPTATQ…TQEPSTTQEH (78 aa)) is 13 X 6 AA approximate tandem repeats. Over residues 191-235 (QEPTATQEPPTTQELTATQEPTTTQETVTEQEPTTTQETVTAQEP) the composition is skewed to low complexity. Residues 236–263 (ITTQEPVTAQEPVTTQELIATQEPSTTQ) are compositionally biased toward polar residues. Basic and acidic residues predominate over residues 264–273 (EHADEKKASE). Residues 266–310 (ADEKKASEGDNISLSRLSEETEEKSHTKKKSSWLKFGRGNKNDKK) form a 45 AA repeat 2 repeat.

In Plasmodium falciparum (isolate FC27 / Papua New Guinea), this protein is 300 kDa antigen AG231 (FIRA).